Consider the following 393-residue polypeptide: Pyridinium-3,5-bisthiocarboxylic acid mononucleotide nickel insertion protein (393 aa).

It belongs to the LarC family.

The catalysed reaction is Ni(II)-pyridinium-3,5-bisthiocarboxylate mononucleotide = pyridinium-3,5-bisthiocarboxylate mononucleotide + Ni(2+). Functionally, involved in the biosynthesis of a nickel-pincer cofactor ((SCS)Ni(II) pincer complex). Binds Ni(2+), and functions in nickel delivery to pyridinium-3,5-bisthiocarboxylic acid mononucleotide (P2TMN), to form the mature cofactor. Is thus probably required for the activation of nickel-pincer cofactor-dependent enzymes. This is Pyridinium-3,5-bisthiocarboxylic acid mononucleotide nickel insertion protein from Nocardioides sp. (strain ATCC BAA-499 / JS614).